The following is a 136-amino-acid chain: uncharacterized protein (136 aa).

Widely expressed.

This is an uncharacterized protein from Homo sapiens (Human).